The following is a 245-amino-acid chain: Deoxyadenosine kinase (245 aa).

Gly-28–Thr-36 serves as a coordination point for ATP. Substrate contacts are provided by Glu-52, Tyr-64, and Gln-75. Asp-99 serves as the catalytic Proton acceptor. Substrate is bound by residues Arg-100, Asp-105, and Glu-165.

Belongs to the DCK/DGK family.

It catalyses the reaction 2'-deoxyadenosine + ATP = dAMP + ADP + H(+). Functionally, specific kinase that phosphorylates deoxyadenosine but not any other deoxyribonucleoside, as part of the deoxyribonucleotide salvage pathway. This is Deoxyadenosine kinase (dak) from Dictyostelium discoideum (Social amoeba).